A 445-amino-acid polypeptide reads, in one-letter code: Neuropeptide Y receptor type 5 (445 aa).

The Extracellular portion of the chain corresponds to 1–42 (MEFKLEEHFNKTFVTENNTAAARNAAFPAWEDYRGSVDDLQY). N-linked (GlcNAc...) asparagine glycans are attached at residues Asn10 and Asn17. A helical transmembrane segment spans residues 43 to 63 (FLIGLYTFVSLLGFMGNLLIL). At 64 to 77 (MAVMKKRNQKTTVN) the chain is on the cytoplasmic side. A helical membrane pass occupies residues 78–98 (FLIGNLAFSDILVVLFCSPFT). Over 99 to 117 (LTSVLLDQWMFGKAMCHIM) the chain is Extracellular. Cys114 and Cys198 are oxidised to a cystine. Residues 118 to 138 (PFLQCVSVLVSTLILISIAIV) form a helical membrane-spanning segment. Residues 139–156 (RYHMIKHPISNNLTANHG) lie on the Cytoplasmic side of the membrane. A helical transmembrane segment spans residues 157–177 (YFLIATVWTLGFAICSPLPVF). Topologically, residues 178-208 (HSLVELKETFGSALLSSKYLCVESWPSDSYR) are extracellular. A helical membrane pass occupies residues 209–229 (IAFTISLLLVQYILPLVCLTV). Over 230-368 (SHTSVCRSIS…KKRSRSVFYR (139 aa)) the chain is Cytoplasmic. The helical transmembrane segment at 369–389 (LTILILVFAVSWMPLHVFHVV) threads the bilayer. Topologically, residues 390–406 (TDFNDNLISNRHFKLVY) are extracellular. A helical membrane pass occupies residues 407 to 427 (CICHLLGMMSCCLNPILYGFL). Topologically, residues 428-445 (NNGIKADLRALIHCLHMS) are cytoplasmic. Cys441 carries S-palmitoyl cysteine lipidation.

The protein belongs to the G-protein coupled receptor 1 family. Brain; hypothalamus.

It localises to the cell membrane. Its function is as follows. Receptor for neuropeptide Y and peptide YY. The activity of this receptor is mediated by G proteins that inhibit adenylate cyclase activity. Seems to be associated with food intake. Could be involved in feeding disorders. The sequence is that of Neuropeptide Y receptor type 5 (Npy5r) from Rattus norvegicus (Rat).